A 496-amino-acid polypeptide reads, in one-letter code: Fibronectin type III and SPRY domain-containing protein 1 (496 aa).

Positions 4-99 (QREALRKIIT…ALESSEELLE (96 aa)) form a coiled coil. The COS domain occupies 105–162 (LQAMDREDFPQAAKQIKDGVTMAPAFRLSLKAKVSDNMSHLMVDFAQERQMLQALKFL). The Fibronectin type-III domain maps to 164-268 (VPSAPVIDLA…EPVTLETPAF (105 aa)). Residues 268 to 477 (FMFRLDASTS…VTTGLQVPSS (210 aa)) enclose the B30.2/SPRY domain. Residues 301-336 (KAREKDGKGRTASPINSPARGTPSPKRMPSGRGGRD) are disordered. R310 and R320 each carry omega-N-methylarginine.

Oligomerization is required for binding to microtubules.

The protein resides in the cytoplasm. Its subcellular location is the cytoskeleton. The protein localises to the microtubule organizing center. It is found in the centrosome. It localises to the nucleus. The protein resides in the cleavage furrow. In terms of biological role, may be involved in microtubule organization and stabilization. This chain is Fibronectin type III and SPRY domain-containing protein 1 (FSD1), found in Macaca fascicularis (Crab-eating macaque).